Consider the following 154-residue polypeptide: Crossover junction endodeoxyribonuclease RuvC (154 aa).

Residues aspartate 7, glutamate 67, and aspartate 139 contribute to the active site. Positions 7, 67, and 139 each coordinate Mg(2+).

This sequence belongs to the RuvC family. In terms of assembly, homodimer which binds Holliday junction (HJ) DNA. The HJ becomes 2-fold symmetrical on binding to RuvC with unstacked arms; it has a different conformation from HJ DNA in complex with RuvA. In the full resolvosome a probable DNA-RuvA(4)-RuvB(12)-RuvC(2) complex forms which resolves the HJ. Mg(2+) is required as a cofactor.

The protein resides in the cytoplasm. It carries out the reaction Endonucleolytic cleavage at a junction such as a reciprocal single-stranded crossover between two homologous DNA duplexes (Holliday junction).. Functionally, the RuvA-RuvB-RuvC complex processes Holliday junction (HJ) DNA during genetic recombination and DNA repair. Endonuclease that resolves HJ intermediates. Cleaves cruciform DNA by making single-stranded nicks across the HJ at symmetrical positions within the homologous arms, yielding a 5'-phosphate and a 3'-hydroxyl group; requires a central core of homology in the junction. The consensus cleavage sequence is 5'-(A/T)TT(C/G)-3'. Cleavage occurs on the 3'-side of the TT dinucleotide at the point of strand exchange. HJ branch migration catalyzed by RuvA-RuvB allows RuvC to scan DNA until it finds its consensus sequence, where it cleaves and resolves the cruciform DNA. The chain is Crossover junction endodeoxyribonuclease RuvC from Prochlorococcus marinus (strain NATL2A).